Here is a 1103-residue protein sequence, read N- to C-terminus: MAPACQILRWALALGLGLMFEVTHAFRSQDEFLSSLESYEIAFPTRVDHNGALLAFSPPPPRRQRRGTGATAESRLFYKVASPSTHFLLNLTRSSRLLAGHVSVEYWTREGLAWQRAARPHCLYAGHLQGQASTSHVAISTCGGLHGLIVADEEEYLIEPLHGGPKGSRSPEESGPHVVYKRSSLRHPHLDTACGVRDEKPWKGRPWWLRTLKPPPARPLGNETERGQPGLKRSVSRERYVETLVVADKMMVAYHGRRDVEQYVLAIMNIVAKLFQDSSLGSTVNILVTRLILLTEDQPTLEITHHAGKSLDSFCKWQKSIVNHSGHGNAIPENGVANHDTAVLITRYDICIYKNKPCGTLGLAPVGGMCERERSCSVNEDIGLATAFTIAHEIGHTFGMNHDGVGNSCGARGQDPAKLMAAHITMKTNPFVWSSCSRDYITSFLDSGLGLCLNNRPPRQDFVYPTVAPGQAYDADEQCRFQHGVKSRQCKYGEVCSELWCLSKSNRCITNSIPAAEGTLCQTHTIDKGWCYKRVCVPFGSRPEGVDGAWGPWTPWGDCSRTCGGGVSSSSRHCDSPRPTIGGKYCLGERRRHRSCNTDDCPPGSQDFREVQCSEFDSIPFRGKFYKWKTYRGGGVKACSLTCLAEGFNFYTERAAAVVDGTPCRPDTVDICVSGECKHVGCDRVLGSDLREDKCRVCGGDGSACETIEGVFSPASPGAGYEDVVWIPKGSVHIFIQDLNLSLSHLALKGDQESLLLEGLPGTPQPHRLPLAGTTFQLRQGPDQVQSLEALGPINASLIVMVLARTELPALRYRFNAPIARDSLPPYSWHYAPWTKCSAQCAGGSQVQAVECRNQLDSSAVAPHYCSAHSKLPKRQRACNTEPCPPDWVVGNWSLCSRSCDAGVRSRSVVCQRRVSAAEEKALDDSACPQPRPPVLEACHGPTCPPEWAALDWSECTPSCGPGLRHRVVLCKSADHRATLPPAHCSPAAKPPATMRCNLRRCPPARWVAGEWGECSAQCGVGQRQRSVRCTSHTGQASHECTEALRPPTTQQCEAKCDSPTPGDGPEECKDVNKVAYCPLVLKFQFCSRAYFRQMCCKTCHGH.

The signal sequence occupies residues 1-25 (MAPACQILRWALALGLGLMFEVTHA). A propeptide spanning residues 26-233 (FRSQDEFLSS…TERGQPGLKR (208 aa)) is cleaved from the precursor. 3 N-linked (GlcNAc...) asparagine glycosylation sites follow: asparagine 90, asparagine 222, and asparagine 323. Positions 213-233 (KPPPARPLGNETERGQPGLKR) are disordered. Residues 239-457 (RYVETLVVAD…GLGLCLNNRP (219 aa)) form the Peptidase M12B domain. Cystine bridges form between cysteine 315–cysteine 376, cysteine 351–cysteine 358, cysteine 370–cysteine 452, cysteine 409–cysteine 436, cysteine 479–cysteine 501, cysteine 490–cysteine 508, cysteine 496–cysteine 531, cysteine 521–cysteine 536, cysteine 559–cysteine 596, cysteine 563–cysteine 601, and cysteine 574–cysteine 586. Residue histidine 392 participates in Zn(2+) binding. Glutamate 393 is an active-site residue. 2 residues coordinate Zn(2+): histidine 396 and histidine 402. The Disintegrin domain occupies 460–546 (QDFVYPTVAP…VPFGSRPEGV (87 aa)). A TSP type-1 1 domain is found at 547–602 (DGAWGPWTPWGDCSRTCGGGVSSSSRHCDSPRPTIGGKYCLGERRRHRSCNTDDCP). The interval 706–828 (ETIEGVFSPA…IARDSLPPYS (123 aa)) is spacer. 2 N-linked (GlcNAc...) asparagine glycosylation sites follow: asparagine 740 and asparagine 795. 4 TSP type-1 domains span residues 825 to 883 (PPYS…NTEP), 884 to 945 (CPPD…PTCP), 947 to 1001 (EWAA…NLRR), and 1003 to 1058 (PPAR…AKCD). Asparagine 892 carries an N-linked (GlcNAc...) asparagine glycan. The PLAC domain maps to 1065–1103 (GPEECKDVNKVAYCPLVLKFQFCSRAYFRQMCCKTCHGH).

As to quaternary structure, interacts with FBN1; this interaction promotes microfibrils assembly. Zn(2+) serves as cofactor. Glycosylated. Can be O-fucosylated by POFUT2 on a serine or a threonine residue found within the consensus sequence C1-X(2)-(S/T)-C2-G of the TSP type-1 repeat domains where C1 and C2 are the first and second cysteine residue of the repeat, respectively. Fucosylated repeats can then be further glycosylated by the addition of a beta-1,3-glucose residue by the glucosyltransferase, B3GALTL. Fucosylation mediates the efficient secretion of ADAMTS family members. Can also be C-glycosylated with one or two mannose molecules on tryptophan residues within the consensus sequence W-X-X-W of the TPRs, and N-glycosylated. These other glycosylations can also facilitate secretion. Widely expressed in adult tissues.

It is found in the secreted. The protein resides in the extracellular space. It localises to the extracellular matrix. Metalloprotease that participate in microfibrils assembly. Microfibrils are extracellular matrix components occurring independently or along with elastin in the formation of elastic tissues. This Homo sapiens (Human) protein is A disintegrin and metalloproteinase with thrombospondin motifs 10 (ADAMTS10).